Consider the following 1065-residue polypeptide: Carbamoyl phosphate synthase large chain (1065 aa).

Positions 1-401 (MPLDKTIKKV…ALLKAVTSLE (401 aa)) are carboxyphosphate synthetic domain. ATP-binding residues include Arg129, Arg169, Gly175, Gly176, Gln208, Val210, Glu215, Gly241, Val242, His243, Gln284, and Glu298. Positions 133-327 (KNLMEEIDEP…IAKIAAKIAV (195 aa)) constitute an ATP-grasp 1 domain. The Mg(2+) site is built by Gln284, Glu298, and Asn300. Mn(2+) is bound by residues Gln284, Glu298, and Asn300. The segment at 402–548 (GKISGLRLEK…YSSYENEDEN (147 aa)) is oligomerization domain. Residues 549–931 (EVTDDKKIVV…AIYKGFRAAG (383 aa)) form a carbamoyl phosphate synthetic domain region. One can recognise an ATP-grasp 2 domain in the interval 673-863 (SELLKELNIP…MVKLAVEILT (191 aa)). ATP contacts are provided by Arg709, Lys748, Ile750, Glu754, Gly779, Val780, His781, Ser782, Gln822, and Glu834. Gln822, Glu834, and Asn836 together coordinate Mg(2+). Mn(2+)-binding residues include Gln822, Glu834, and Asn836. The 134-residue stretch at 932-1065 (IEVPKDGGNL…EYRAMKEYFK (134 aa)) folds into the MGS-like domain. The allosteric domain stretch occupies residues 932–1065 (IEVPKDGGNL…EYRAMKEYFK (134 aa)).

It belongs to the CarB family. Composed of two chains; the small (or glutamine) chain promotes the hydrolysis of glutamine to ammonia, which is used by the large (or ammonia) chain to synthesize carbamoyl phosphate. Tetramer of heterodimers (alpha,beta)4. Mg(2+) serves as cofactor. It depends on Mn(2+) as a cofactor.

The enzyme catalyses hydrogencarbonate + L-glutamine + 2 ATP + H2O = carbamoyl phosphate + L-glutamate + 2 ADP + phosphate + 2 H(+). It carries out the reaction hydrogencarbonate + NH4(+) + 2 ATP = carbamoyl phosphate + 2 ADP + phosphate + 2 H(+). It participates in amino-acid biosynthesis; L-arginine biosynthesis; carbamoyl phosphate from bicarbonate: step 1/1. Its pathway is pyrimidine metabolism; UMP biosynthesis via de novo pathway; (S)-dihydroorotate from bicarbonate: step 1/3. In terms of biological role, large subunit of the glutamine-dependent carbamoyl phosphate synthetase (CPSase). CPSase catalyzes the formation of carbamoyl phosphate from the ammonia moiety of glutamine, carbonate, and phosphate donated by ATP, constituting the first step of 2 biosynthetic pathways, one leading to arginine and/or urea and the other to pyrimidine nucleotides. The large subunit (synthetase) binds the substrates ammonia (free or transferred from glutamine from the small subunit), hydrogencarbonate and ATP and carries out an ATP-coupled ligase reaction, activating hydrogencarbonate by forming carboxy phosphate which reacts with ammonia to form carbamoyl phosphate. The polypeptide is Carbamoyl phosphate synthase large chain (Clostridium acetobutylicum (strain ATCC 824 / DSM 792 / JCM 1419 / IAM 19013 / LMG 5710 / NBRC 13948 / NRRL B-527 / VKM B-1787 / 2291 / W)).